A 174-amino-acid chain; its full sequence is Large ribosomal subunit protein uL22 (174 aa).

The protein belongs to the universal ribosomal protein uL22 family. Part of the 50S ribosomal subunit.

This protein binds specifically to 23S rRNA. It makes multiple contacts with different domains of the 23S rRNA in the assembled 50S subunit and ribosome. In terms of biological role, the globular domain of the protein is located near the polypeptide exit tunnel on the outside of the subunit, while an extended beta-hairpin is found that lines the wall of the exit tunnel in the center of the 70S ribosome. The sequence is that of Large ribosomal subunit protein uL22 from Nanoarchaeum equitans (strain Kin4-M).